The chain runs to 405 residues: L-carnitine CoA-transferase (405 aa).

Lys97 and Arg104 together coordinate CoA. Asp169 functions as the Nucleophile in the catalytic mechanism.

It belongs to the CoA-transferase III family. CaiB subfamily. In terms of assembly, homodimer.

It is found in the cytoplasm. It catalyses the reaction crotonobetainyl-CoA + (R)-carnitine = crotonobetaine + (R)-carnitinyl-CoA. It carries out the reaction 4-(trimethylamino)butanoyl-CoA + (R)-carnitine = (R)-carnitinyl-CoA + 4-(trimethylamino)butanoate. It participates in amine and polyamine metabolism; carnitine metabolism. In terms of biological role, catalyzes the reversible transfer of the CoA moiety from gamma-butyrobetainyl-CoA to L-carnitine to generate L-carnitinyl-CoA and gamma-butyrobetaine. Is also able to catalyze the reversible transfer of the CoA moiety from gamma-butyrobetainyl-CoA or L-carnitinyl-CoA to crotonobetaine to generate crotonobetainyl-CoA. The chain is L-carnitine CoA-transferase from Escherichia coli O6:K15:H31 (strain 536 / UPEC).